The following is a 131-amino-acid chain: Large ribosomal subunit protein eL32 (131 aa).

It belongs to the eukaryotic ribosomal protein eL32 family.

The chain is Large ribosomal subunit protein eL32 (rpl32e) from Sulfurisphaera tokodaii (strain DSM 16993 / JCM 10545 / NBRC 100140 / 7) (Sulfolobus tokodaii).